We begin with the raw amino-acid sequence, 78 residues long: Small integral membrane protein 1 (78 aa).

N-acetylmethionine is present on methionine 1. Positions 1 to 18 are enriched in basic and acidic residues; the sequence is MQPQESHVHYSRWEDGSR. Residues 1-20 form a disordered region; sequence MQPQESHVHYSRWEDGSRDG. Topologically, residues 1–46 are cytoplasmic; that stretch reads MQPQESHVHYSRWEDGSRDGVSLGAVSSTEEASRCRRISQRLCTGK. Phosphoserine is present on residues serine 6, serine 17, serine 22, and serine 27. Residues 47–67 traverse the membrane as a helical; Signal-anchor for type II membrane protein segment; sequence LGIAMKVLGGVALFWIIFILG. Over 68-78 the chain is Extracellular; it reads YLTGYYVHKCK. The tract at residues 68–78 is displays the Vel antigen; it reads YLTGYYVHKCK.

The protein belongs to the SMIM1 family. In terms of assembly, homooligomer; disulfide-linked. As to expression, highly expressed in the bone marrow and expressed at lower levels in non-hematopoietic tissues. Highly expressed in erythroleukemia cell lines. Up-regulated in CD34+ hematopoietic progenitors cultured toward red blood cells.

Its subcellular location is the cell membrane. Regulator of red blood cell formation. The protein is Small integral membrane protein 1 of Homo sapiens (Human).